Here is a 496-residue protein sequence, read N- to C-terminus: Probable cytosol aminopeptidase (496 aa).

2 residues coordinate Mn(2+): K261 and D266. K273 is a catalytic residue. Mn(2+) contacts are provided by D284, D343, and E345. Residue R347 is part of the active site.

This sequence belongs to the peptidase M17 family. Requires Mn(2+) as cofactor.

The protein resides in the cytoplasm. The catalysed reaction is Release of an N-terminal amino acid, Xaa-|-Yaa-, in which Xaa is preferably Leu, but may be other amino acids including Pro although not Arg or Lys, and Yaa may be Pro. Amino acid amides and methyl esters are also readily hydrolyzed, but rates on arylamides are exceedingly low.. The enzyme catalyses Release of an N-terminal amino acid, preferentially leucine, but not glutamic or aspartic acids.. Presumably involved in the processing and regular turnover of intracellular proteins. Catalyzes the removal of unsubstituted N-terminal amino acids from various peptides. The protein is Probable cytosol aminopeptidase of Bacillus pumilus (strain SAFR-032).